The chain runs to 321 residues: Transmembrane and ubiquitin-like domain-containing protein 2 (321 aa).

Residues 36 to 56 (VMVVAGVVVLILALVLAWLST) traverse the membrane as a helical segment. Disordered stretches follow at residues 87 to 131 (LVAG…GGVE) and 145 to 170 (KRQAGAGSSSPEAPLRSEDSTCLPPS). The segment covering 104 to 120 (EGNDEKAEEAGEGRGDS) has biased composition (basic and acidic residues). A Ubiquitin-like domain is found at 174–247 (ITVRLKFLND…IHCHRSPPGS (74 aa)). 2 helical membrane passes run 266-286 (LGVNVGSLMVPVFVVLLGVVW) and 295-315 (FFTAPATVSLVGVTVFFSFLV).

Its subcellular location is the membrane. This is Transmembrane and ubiquitin-like domain-containing protein 2 (TMUB2) from Homo sapiens (Human).